Reading from the N-terminus, the 187-residue chain is RNA pyrophosphohydrolase (187 aa).

The Nudix hydrolase domain maps to 6-149 (GYRANVGIIL…KRQVYRQALT (144 aa)). A Nudix box motif is present at residues 38–59 (GGIKSGETPTEAMYRELAEETG). A disordered region spans residues 166–187 (AYREPLEPVEKNRKKSSDTRQS).

Belongs to the Nudix hydrolase family. RppH subfamily. It depends on a divalent metal cation as a cofactor.

Its function is as follows. Accelerates the degradation of transcripts by removing pyrophosphate from the 5'-end of triphosphorylated RNA, leading to a more labile monophosphorylated state that can stimulate subsequent ribonuclease cleavage. This is RNA pyrophosphohydrolase from Nitrosomonas europaea (strain ATCC 19718 / CIP 103999 / KCTC 2705 / NBRC 14298).